Reading from the N-terminus, the 424-residue chain is Serine--tRNA ligase (424 aa).

Residue 230–232 participates in L-serine binding; sequence TAE. 261–263 is a binding site for ATP; it reads RSE. An L-serine-binding site is contributed by Glu-284. 348–351 is a binding site for ATP; sequence EISS. Ser-384 is a binding site for L-serine.

The protein belongs to the class-II aminoacyl-tRNA synthetase family. Type-1 seryl-tRNA synthetase subfamily. As to quaternary structure, homodimer. The tRNA molecule binds across the dimer.

It localises to the cytoplasm. The enzyme catalyses tRNA(Ser) + L-serine + ATP = L-seryl-tRNA(Ser) + AMP + diphosphate + H(+). It catalyses the reaction tRNA(Sec) + L-serine + ATP = L-seryl-tRNA(Sec) + AMP + diphosphate + H(+). It functions in the pathway aminoacyl-tRNA biosynthesis; selenocysteinyl-tRNA(Sec) biosynthesis; L-seryl-tRNA(Sec) from L-serine and tRNA(Sec): step 1/1. In terms of biological role, catalyzes the attachment of serine to tRNA(Ser). Is also able to aminoacylate tRNA(Sec) with serine, to form the misacylated tRNA L-seryl-tRNA(Sec), which will be further converted into selenocysteinyl-tRNA(Sec). This is Serine--tRNA ligase from Streptococcus pneumoniae serotype 2 (strain D39 / NCTC 7466).